The primary structure comprises 246 residues: Nuclear transcription factor Y subunit C-2 (246 aa).

Disordered regions lie at residues 1 to 35 (MDNQ…AVPH) and 205 to 246 (QQGA…PSSE). Low complexity predominate over residues 9-21 (AGQPAAAGAGAPV).

The protein belongs to the NFYC/HAP5 subunit family. As to quaternary structure, heterotrimeric transcription factor composed of three components, NF-YA, NF-YB and NF-YC. NF-YB and NF-YC must interact and dimerize for NF-YA association and DNA binding. Interacts with NFYB8, NFYB10 and HD5/NFYB11.

It localises to the nucleus. The protein resides in the cytoplasm. In terms of biological role, probable transcription factor involved in the regulation of flowering time under long day (LD) conditions. Functions as a repressor of flowering, independently of HD1 and GHD7. Controls flowering time by negatively regulating the expression of EHD1 and HD3A. Component of the NF-Y/HAP transcription factor complex. The protein is Nuclear transcription factor Y subunit C-2 of Oryza sativa subsp. japonica (Rice).